A 206-amino-acid chain; its full sequence is 2-oxoglutarate-dependent dioxygenase iboH (206 aa).

The 107-residue stretch at 51 to 157 folds into the Fe2OG dioxygenase domain; the sequence is PSTTTLVLLH…RYSIAYFLRP (107 aa). H75, D77, and H134 together coordinate Fe cation. R148 lines the 2-oxoglutarate pocket.

This sequence belongs to the iron/ascorbate-dependent oxidoreductase family. It depends on Fe(2+) as a cofactor.

It carries out the reaction L-glutamate + 2-oxoglutarate + O2 = (3R)-3-hydroxy-L-glutamate + succinate + CO2. It functions in the pathway secondary metabolite biosynthesis. Functionally, 2-oxoglutarate-dependent dioxygenase; part of the gene cluster that mediates the biosynthesis of the psychoactive metabolites ibotenic acid and muscimol. The first committed step is glutamate hydroxylation by the 2-oxoglutarate-dependent dioxygenase iboH, and the last step is decarboxylation of ibotenic acid to muscimol by the decarboxylase iboD. The order of the intermediate reactions is somewhat ambiguous. IboA likely activates the carboxylic acid at position 5 to introduce an amide bond, and the flavin monooxygenase iboF generates the N-O bond. There are several options for the latter step. One option is that iboF directly hydroxylates the amide nitrogen formed by iboA to produce a hydroxamic acid species. Another option is that iboF hydroxylates an external N-containing compound, whose resulting N-O bond is subsequently introduced into the hydroxyglutamate scaffold. The paralogous PLP-dependent cystathionine gamma-synthase-like enzymes iboG1 and iboG2 are likely involved in substitution of the OH group at position 3 by the O-N moiety. The first cyclic intermediate is most probably tricholomic acid which is likely desaturated to ibotenic acid by the cytochrome P450 monooxygenase iboC. This chain is 2-oxoglutarate-dependent dioxygenase iboH, found in Amanita muscaria (strain Koide BX008).